The sequence spans 240 residues: EHSGDNVRHVFLNHNFTLVASVTIEEAPSEKTPLLTALLGDAEPPYFMRLSYTADNKWETISKGDKKLTTESRPWVPKKEHQVALMLQGNKASVYIDGESLGEEAPLTVETPLEPFGFCFGACDFDDDDDGGDDDDEEDSQEESSPKESSPEKIGKKPHVTVTNVFLYNRPLNPTEMRAIKDRIPVSTRAPEPQVKIAPKPVAPAAPGSLRCLAHGKYQQHRGGQLWGEPPIPNMRQRDA.

Positions 127–142 (DDDDGGDDDDEEDSQE) are enriched in acidic residues. Disordered regions lie at residues 127–158 (DDDD…GKKP) and 221–240 (HRGG…QRDA). Basic and acidic residues predominate over residues 144–155 (SSPKESSPEKIG).

This sequence belongs to the glycosyl hydrolase 33 family.

It catalyses the reaction Hydrolysis of alpha-(2-&gt;3)-, alpha-(2-&gt;6)-, alpha-(2-&gt;8)- glycosidic linkages of terminal sialic acid residues in oligosaccharides, glycoproteins, glycolipids, colominic acid and synthetic substrates.. Functionally, developmentally regulated neuraminidase implicated in parasite invasion of cells. May contribute to the pathology during T.cruzi infection by cleaving sialic acid from cells of the immune system. The protein is Sialidase 85-1.2 (SA85-1.2) of Trypanosoma cruzi.